We begin with the raw amino-acid sequence, 674 residues long: Probable nucleolar GTP-binding protein 1 (674 aa).

Residues 169–346 (RTLLLTGYPN…VKDTACSILF (178 aa)) enclose the OBG-type G domain. GTP-binding positions include 175-182 (GYPNVGKS), 221-225 (DTPGI), and 289-292 (NKID). The segment covering 518–527 (RINHQIKDSS) has biased composition (basic and acidic residues). Disordered regions lie at residues 518-538 (RINHQIKDSSKPQLSKGRRGI) and 564-674 (VRDH…NDFR). Over residues 570 to 580 (SRISGKKRSRS) the composition is skewed to basic residues. Basic and acidic residues-rich tracts occupy residues 619 to 633 (GFHDLAQKEKADKLD) and 641 to 653 (NQDGRKGESDRHV).

Belongs to the TRAFAC class OBG-HflX-like GTPase superfamily. OBG GTPase family. NOG subfamily.

The protein resides in the nucleus. It localises to the nucleolus. Involved in the biogenesis of the 60S ribosomal subunit. This is Probable nucleolar GTP-binding protein 1 (nog1) from Dictyostelium discoideum (Social amoeba).